Consider the following 239-residue polypeptide: Lectin (239 aa).

Asparagine 17 and asparagine 113 each carry an N-linked (GlcNAc...) asparagine glycan.

Belongs to the leguminous lectin family. As to quaternary structure, homodimer.

Galactose and N-acetyllactosamine specific lectin. The protein is Lectin of Erythrina crista-galli (Cockspur coral tree).